A 160-amino-acid polypeptide reads, in one-letter code: Large ribosomal subunit protein uL16 (160 aa).

The protein belongs to the universal ribosomal protein uL16 family. Part of the 50S ribosomal subunit.

In terms of biological role, binds 23S rRNA and is also seen to make contacts with the A and possibly P site tRNAs. The chain is Large ribosomal subunit protein uL16 from Prochlorococcus marinus (strain MIT 9515).